The sequence spans 300 residues: Porphobilinogen deaminase (300 aa).

C239 carries the post-translational modification S-(dipyrrolylmethanemethyl)cysteine.

Belongs to the HMBS family. In terms of assembly, monomer. Dipyrromethane serves as cofactor.

The catalysed reaction is 4 porphobilinogen + H2O = hydroxymethylbilane + 4 NH4(+). It participates in porphyrin-containing compound metabolism; protoporphyrin-IX biosynthesis; coproporphyrinogen-III from 5-aminolevulinate: step 2/4. Its function is as follows. Tetrapolymerization of the monopyrrole PBG into the hydroxymethylbilane pre-uroporphyrinogen in several discrete steps. The polypeptide is Porphobilinogen deaminase (Francisella tularensis subsp. novicida (strain U112)).